Consider the following 205-residue polypeptide: Guanylate kinase (205 aa).

The 179-residue stretch at 5 to 183 folds into the Guanylate kinase-like domain; the sequence is GTLYTVSAPS…ALTEFRSIVV (179 aa). 12-19 contacts ATP; that stretch reads APSGAGKT.

Belongs to the guanylate kinase family.

The protein localises to the cytoplasm. The enzyme catalyses GMP + ATP = GDP + ADP. Essential for recycling GMP and indirectly, cGMP. This Saccharophagus degradans (strain 2-40 / ATCC 43961 / DSM 17024) protein is Guanylate kinase.